Here is a 145-residue protein sequence, read N- to C-terminus: Actin-depolymerizing factor 11 (145 aa).

The region spanning Ser-11–His-145 is the ADF-H domain.

Belongs to the actin-binding proteins ADF family.

Its function is as follows. Actin-depolymerizing protein. Severs actin filaments (F-actin) and binds to actin monomers. This is Actin-depolymerizing factor 11 (ADF11) from Oryza sativa subsp. japonica (Rice).